Reading from the N-terminus, the 127-residue chain is Small ribosomal subunit protein eS8 (127 aa).

Residues 1–33 (MAIWQGKSMKKPSGGRAKMNRGKRKYELGREPA) form a disordered region.

This sequence belongs to the eukaryotic ribosomal protein eS8 family. As to quaternary structure, part of the 30S ribosomal subunit.

This is Small ribosomal subunit protein eS8 (rps8e) from Methanothermobacter thermautotrophicus (strain ATCC 29096 / DSM 1053 / JCM 10044 / NBRC 100330 / Delta H) (Methanobacterium thermoautotrophicum).